The primary structure comprises 269 residues: Ribonuclease HII (269 aa).

Residues 83-269 form the RNase H type-2 domain; that stretch reads YLIAGVDEVG…HRMSFLTNIL (187 aa). D89, E90, and D185 together coordinate a divalent metal cation.

Belongs to the RNase HII family. Mn(2+) serves as cofactor. Requires Mg(2+) as cofactor.

The protein resides in the cytoplasm. The catalysed reaction is Endonucleolytic cleavage to 5'-phosphomonoester.. Endonuclease that specifically degrades the RNA of RNA-DNA hybrids. The polypeptide is Ribonuclease HII (Clostridium botulinum (strain ATCC 19397 / Type A)).